The sequence spans 208 residues: MKSDLWYFLLFCFQVEALTGEINDSTKSEMFTFHDGGVQILCKFNAIVSQYKMELLKGTEVLCDLTTTKENGNTVSKNPKFCQSQSSSDGVSFFLYNLDSSHASYYACQLSIFDPPPFQRKNISREYLNVYESQTCCQLKFWLPIGCAAFVVVYIFGCIFLCWLTKKKYRSSVHDPNSEYMFMAAVNTAKKPGLTGVTHNLELCGTQA.

Positions 1 to 19 (MKSDLWYFLLFCFQVEALT) are cleaved as a signal peptide. At 20-140 (GEINDSTKSE…YESQTCCQLK (121 aa)) the chain is on the extracellular side. N-linked (GlcNAc...) asparagine glycosylation occurs at N23. One can recognise an Ig-like V-type domain in the interval 30–132 (MFTFHDGGVQ…ISREYLNVYE (103 aa)). 2 disulfide bridges follow: C42/C108 and C63/C82. N122 carries N-linked (GlcNAc...) asparagine glycosylation. Residues 141–161 (FWLPIGCAAFVVVYIFGCIFL) form a helical membrane-spanning segment. At 162 to 208 (CWLTKKKYRSSVHDPNSEYMFMAAVNTAKKPGLTGVTHNLELCGTQA) the chain is on the cytoplasmic side.

As to quaternary structure, homodimer; disulfide-linked. Interacts with ICOSLG. Interacts with PIK3R1. Interacts with TBK1; this interaction is critical for the maturation of T follicular regulatory cells. N-glycosylated.

The protein localises to the cell membrane. Its function is as follows. Stimulatory receptor expressed in activated or antigen-experienced T-cells that plays an important role in the immune response. Upon binding to its ligand ICOSL expressed on antigen presenting cells (APCs), delivers costimulatory signals that enhances all basic T-cell responses to a foreign antigen, namely proliferation, secretion of lymphokines including IL10, up-regulation of molecules that mediate cell-cell interaction, and effective help for antibody secretion by B-cells. Also acts as a costimulatory receptor critical for the differentiation of T follicular regulatory cells upon immune challenges such as viral infection. Mechanistically, potentiates TCR-induced calcium flux by augmenting PLCG1 activation and actin remodeling. In addition, activates PI3K signaling pathways independently of calcium flux. Essential both for efficient interaction between T and B-cells and for normal antibody responses to T-cell dependent antigens. Prevents the apoptosis of pre-activated T-cells. Plays a critical role in CD40-mediated class switching of immunoglobin isotypes. The sequence is that of Inducible T-cell costimulator (ICOS) from Canis lupus familiaris (Dog).